A 490-amino-acid chain; its full sequence is Betaine aldehyde dehydrogenase (490 aa).

2 residues coordinate K(+): Ile-27 and Asp-93. 150–152 (GAW) provides a ligand contact to NAD(+). Catalysis depends on Lys-162, which acts as the Charge relay system. Residue 176 to 179 (KPSE) participates in NAD(+) binding. Val-180 contributes to the K(+) binding site. Position 230 to 233 (230 to 233 (GTDT)) interacts with NAD(+). Position 246 (Leu-246) interacts with K(+). The Proton acceptor role is filled by Glu-252. NAD(+) is bound by residues Gly-254, Cys-286, and Glu-387. The Nucleophile role is filled by Cys-286. Residue Cys-286 is modified to Cysteine sulfenic acid (-SOH). Lys-457 and Gly-460 together coordinate K(+). Glu-464 functions as the Charge relay system in the catalytic mechanism.

This sequence belongs to the aldehyde dehydrogenase family. In terms of assembly, dimer of dimers. K(+) serves as cofactor.

The catalysed reaction is betaine aldehyde + NAD(+) + H2O = glycine betaine + NADH + 2 H(+). The protein operates within amine and polyamine biosynthesis; betaine biosynthesis via choline pathway; betaine from betaine aldehyde: step 1/1. In terms of biological role, involved in the biosynthesis of the osmoprotectant glycine betaine. Catalyzes the irreversible oxidation of betaine aldehyde to the corresponding acid. The polypeptide is Betaine aldehyde dehydrogenase (Pseudomonas syringae pv. syringae (strain B728a)).